A 162-amino-acid chain; its full sequence is CD-NTase-associated protein 7 (162 aa).

The tract at residues 138 to 162 (HSGLTQSGGREYSSNGYGMQRKDYN) is disordered. The segment covering 139–154 (SGLTQSGGREYSSNGY) has biased composition (polar residues).

The protein belongs to the HORMA family. HORMA1 subfamily. In terms of assembly, forms complexes with CdnC with 1:1 and 2:2 stoichimetry, and a 1:1:6 CdnC:Cap7:Cap6 complex.

In terms of biological role, sensor protein of a CBASS antivirus system. CBASS (cyclic oligonucleotide-based antiphage signaling system) provides immunity against bacteriophage. The CD-NTase protein synthesizes cyclic nucleotides in response to infection; these serve as specific second messenger signals. The signals activate a diverse range of effectors, leading to bacterial cell death and thus abortive phage infection. A type III CBASS system. Expression of this CBASS system (Cap18-Cap6-Cap7-CdnC-CapW-Cap17) in a susceptible E.coli (strain MG1655) confers resistance to bacteriophage P1. The sensor protein for this CBASS system. Binds to a closure peptide, which allows it to activate CdnC for second messenger synthesis. The polypeptide is CD-NTase-associated protein 7 (Escherichia coli (strain KTE188)).